Here is a 46-residue protein sequence, read N- to C-terminus: MDFNPSEVASQVTNYIQAIAAAGVGVLALAIGLSAAWKYAKRFLKG.

N-formylmethionine; by host is present on M1. The Periplasmic portion of the chain corresponds to 1–17; sequence MDFNPSEVASQVTNYIQ. The helical transmembrane segment at 18–37 threads the bilayer; that stretch reads AIAAAGVGVLALAIGLSAAW. The Cytoplasmic segment spans residues 38–46; sequence KYAKRFLKG.

It belongs to the inovirus capsid protein family. Homomultimerizes. There are several thousands of this protein in the phage capsid.

It is found in the virion. The protein resides in the host membrane. Self assembles to form a helical capsid wrapping up the viral genomic DNA. The capsid displays a filamentous structure with a length of 760-1950 nm and a width of 6-8 nm. The virion assembly and budding take place at the host inner membrane. The sequence is that of Capsid protein G8P (VIII) from Thermus thermophilus (Bacteriophage PH75).